The chain runs to 249 residues: tRNA (guanine-N(7)-)-methyltransferase (249 aa).

The disordered stretch occupies residues M1–A24. S-adenosyl-L-methionine is bound by residues E81, E106, D133, and D156. D156 is an active-site residue. A substrate-binding site is contributed by K160. An interaction with RNA region spans residues R162–R167. Substrate-binding positions include D192 and T227–E230.

The protein belongs to the class I-like SAM-binding methyltransferase superfamily. TrmB family.

It carries out the reaction guanosine(46) in tRNA + S-adenosyl-L-methionine = N(7)-methylguanosine(46) in tRNA + S-adenosyl-L-homocysteine. The protein operates within tRNA modification; N(7)-methylguanine-tRNA biosynthesis. In terms of biological role, catalyzes the formation of N(7)-methylguanine at position 46 (m7G46) in tRNA. This chain is tRNA (guanine-N(7)-)-methyltransferase, found in Paracidovorax citrulli (strain AAC00-1) (Acidovorax citrulli).